Consider the following 123-residue polypeptide: Large ribosomal subunit protein bL12 (123 aa).

Belongs to the bacterial ribosomal protein bL12 family. In terms of assembly, homodimer. Part of the ribosomal stalk of the 50S ribosomal subunit. Forms a multimeric L10(L12)X complex, where L10 forms an elongated spine to which 2 to 4 L12 dimers bind in a sequential fashion. Binds GTP-bound translation factors.

In terms of biological role, forms part of the ribosomal stalk which helps the ribosome interact with GTP-bound translation factors. Is thus essential for accurate translation. In Mycoplasmopsis synoviae (strain 53) (Mycoplasma synoviae), this protein is Large ribosomal subunit protein bL12.